Here is a 207-residue protein sequence, read N- to C-terminus: LexA repressor (207 aa).

A DNA-binding region (H-T-H motif) is located at residues 28 to 48 (RAEIARELGFRSANAAEEHLK). Active-site for autocatalytic cleavage activity residues include Ser124 and Lys161.

The protein belongs to the peptidase S24 family. Homodimer.

It catalyses the reaction Hydrolysis of Ala-|-Gly bond in repressor LexA.. Its function is as follows. Represses a number of genes involved in the response to DNA damage (SOS response), including recA and lexA. In the presence of single-stranded DNA, RecA interacts with LexA causing an autocatalytic cleavage which disrupts the DNA-binding part of LexA, leading to derepression of the SOS regulon and eventually DNA repair. The polypeptide is LexA repressor (Vibrio vulnificus (strain CMCP6)).